Here is a 1378-residue protein sequence, read N- to C-terminus: DNA-directed RNA polymerase subunit beta (1378 aa).

The protein belongs to the RNA polymerase beta chain family. As to quaternary structure, the RNAP catalytic core consists of 2 alpha, 1 beta, 1 beta' and 1 omega subunit. When a sigma factor is associated with the core the holoenzyme is formed, which can initiate transcription.

The enzyme catalyses RNA(n) + a ribonucleoside 5'-triphosphate = RNA(n+1) + diphosphate. Functionally, DNA-dependent RNA polymerase catalyzes the transcription of DNA into RNA using the four ribonucleoside triphosphates as substrates. This Agrobacterium fabrum (strain C58 / ATCC 33970) (Agrobacterium tumefaciens (strain C58)) protein is DNA-directed RNA polymerase subunit beta.